The sequence spans 41 residues: Large ribosomal subunit protein bL36 (41 aa).

Belongs to the bacterial ribosomal protein bL36 family.

In Paracoccus denitrificans (strain Pd 1222), this protein is Large ribosomal subunit protein bL36.